The chain runs to 74 residues: Cecropin-P4 (74 aa).

The N-terminal stretch at Met1–Ser13 is a signal peptide. Residues His45–Leu74 constitute a propeptide, removed in mature form. The segment at His51–Leu74 is disordered.

The protein belongs to the cecropin family. As to expression, expressed in the body wall, intestine, uterus and ovary.

It localises to the secreted. In terms of biological role, has antibacterial activity against several Gram-positive and Gram-negative bacteria. Is weakly active against yeasts. Acts by a nonpore mechanism. This is Cecropin-P4 (ASCEC-4) from Ascaris suum (Pig roundworm).